The primary structure comprises 137 residues: UPF0148 protein MJ0890 (137 aa).

This sequence belongs to the UPF0148 family.

In Methanocaldococcus jannaschii (strain ATCC 43067 / DSM 2661 / JAL-1 / JCM 10045 / NBRC 100440) (Methanococcus jannaschii), this protein is UPF0148 protein MJ0890.